Here is a 211-residue protein sequence, read N- to C-terminus: GATA transcription factor 19 (211 aa).

The GATA-type zinc-finger motif lies at 77–102 (CANCDTTSTPLWRNGPRGPKSLCNAC). Residues 111–131 (RRASTARNSTSGGGSTAAGVP) are disordered.

The protein belongs to the type IV zinc-finger family. Class B subfamily. In terms of assembly, forms heterodimers with GATA18.

The protein localises to the nucleus. Its function is as follows. Transcriptional regulator that specifically binds 5'-GATA-3' or 5'-GAT-3' motifs within gene promoters. Regulates both flower and shoot apical meristem (SAM) development, especially for establishing organ boundaries in shoots and flowers, probably by controlling the number and position of WUS-expressing cells. This chain is GATA transcription factor 19, found in Arabidopsis thaliana (Mouse-ear cress).